Consider the following 465-residue polypeptide: Endo-1,3-1,4-beta-glycanase ExsH (465 aa).

Hemolysin-type calcium-binding repeat units lie at residues 33-50, 105-122, and 123-140; these read HGTA…VNVT, FGNE…TQTI, and DGRG…ADTF. The 257-residue stretch at 206-462 folds into the GH16 domain; the sequence is AHQFRLSLDR…YIKAYSLDAD (257 aa). Residue E349 is the Nucleophile of the active site. Residue E354 is the Proton donor of the active site.

This sequence belongs to the glycosyl hydrolase 16 family.

It localises to the secreted. It participates in glycan metabolism; exopolysaccharide biosynthesis. Cleaves high molecular weight succinoglycan to yield LMW succinoglycan. Dynamically regulates the molecular weight distribution of succinoglycan by cleaving nascent succinoglycan only during a limited period after its synthesis, perhaps before it undergoes a time-dependent change in its conformation or aggregation state. The chain is Endo-1,3-1,4-beta-glycanase ExsH (exsH) from Rhizobium meliloti (strain 1021) (Ensifer meliloti).